A 211-amino-acid polypeptide reads, in one-letter code: Arginine exporter protein ArgO (211 aa).

6 consecutive transmembrane segments (helical) span residues 1-21 (MISY…PLGP), 37-57 (LMIA…GIFG), 68-88 (LLAL…FGAL), 111-131 (IIAT…DTFV), 147-167 (WFAL…ALLA), and 179-199 (AQRI…FQLA).

This sequence belongs to the LysE/ArgO transporter (TC 2.A.75) family.

It localises to the cell inner membrane. It catalyses the reaction L-arginine(in) = L-arginine(out). Functionally, involved in the export of arginine. Important to control the intracellular level of arginine and the correct balance between arginine and lysine. The sequence is that of Arginine exporter protein ArgO from Salmonella paratyphi A (strain ATCC 9150 / SARB42).